The sequence spans 132 residues: ATP synthase epsilon chain (132 aa).

Belongs to the ATPase epsilon chain family. In terms of assembly, F-type ATPases have 2 components, CF(1) - the catalytic core - and CF(0) - the membrane proton channel. CF(1) has five subunits: alpha(3), beta(3), gamma(1), delta(1), epsilon(1). CF(0) has three main subunits: a, b and c.

It localises to the cell inner membrane. Its function is as follows. Produces ATP from ADP in the presence of a proton gradient across the membrane. This chain is ATP synthase epsilon chain, found in Gloeobacter violaceus (strain ATCC 29082 / PCC 7421).